The sequence spans 360 residues: 3-isopropylmalate dehydrogenase (360 aa).

76–89 (GPKWDKIERDIRPE) is an NAD(+) binding site. Substrate is bound by residues Arg-96, Arg-106, Arg-134, and Asp-224. The Mg(2+) site is built by Asp-224, Asp-248, and Asp-252. 282 to 294 (GSAPDIAGQGIAN) lines the NAD(+) pocket.

Belongs to the isocitrate and isopropylmalate dehydrogenases family. LeuB type 1 subfamily. Homodimer. It depends on Mg(2+) as a cofactor. Mn(2+) serves as cofactor.

It localises to the cytoplasm. The catalysed reaction is (2R,3S)-3-isopropylmalate + NAD(+) = 4-methyl-2-oxopentanoate + CO2 + NADH. Its pathway is amino-acid biosynthesis; L-leucine biosynthesis; L-leucine from 3-methyl-2-oxobutanoate: step 3/4. Its function is as follows. Catalyzes the oxidation of 3-carboxy-2-hydroxy-4-methylpentanoate (3-isopropylmalate) to 3-carboxy-4-methyl-2-oxopentanoate. The product decarboxylates to 4-methyl-2 oxopentanoate. This Pseudomonas fluorescens (strain ATCC BAA-477 / NRRL B-23932 / Pf-5) protein is 3-isopropylmalate dehydrogenase.